A 241-amino-acid chain; its full sequence is Probable septum site-determining protein MinC (241 aa).

Belongs to the MinC family. Interacts with MinD and FtsZ.

Functionally, cell division inhibitor that blocks the formation of polar Z ring septums. Rapidly oscillates between the poles of the cell to destabilize FtsZ filaments that have formed before they mature into polar Z rings. Prevents FtsZ polymerization. The chain is Probable septum site-determining protein MinC from Rhizobium rhizogenes (strain K84 / ATCC BAA-868) (Agrobacterium radiobacter).